We begin with the raw amino-acid sequence, 426 residues long: Inhibin beta A chain (426 aa).

The N-terminal stretch at 1 to 20 (MPLLWLRGFLLASCWIIVRS) is a signal peptide. Residues 21–310 (SPTPGSEGHS…EDHPHRRRRR (290 aa)) constitute a propeptide that is removed on maturation. N-linked (GlcNAc...) asparagine glycosylation occurs at asparagine 165. The disordered stretch occupies residues 259 to 288 (KKKKKEEEGEGKKKGGGEGGAGADEEKEQS). Over residues 263 to 274 (KEEEGEGKKKGG) the composition is skewed to basic and acidic residues. 4 disulfide bridges follow: cysteine 314-cysteine 322, cysteine 321-cysteine 391, cysteine 350-cysteine 423, and cysteine 354-cysteine 425.

The protein belongs to the TGF-beta family. Dimeric, linked by one or more disulfide bonds. Inhibin A is a dimer of alpha/INHA and beta-A/INHBA. Activin A is a homodimer of beta-A/INHBA. Activin AB is a dimer of beta-A/INHBA and beta-B/INHBB. Interacts with FST and FSTL3; these interactions prevent activin A interaction to its type II receptor. Activin A interacts with ACVR2A. Activin A interacts with BMPR2. Inhibin A interacts with ACVR1; this interaction creates a non-signaling complex (NSC) that inhibits ACVR1-mediated BMP signaling. Inhibin A interacts with ACVR2A.

The protein localises to the secreted. Its function is as follows. Inhibins/activins are involved in regulating a number of diverse functions such as hypothalamic and pituitary hormone secretion, gonadal hormone secretion, germ cell development and maturation, erythroid differentiation, insulin secretion, nerve cell survival, embryonic axial development or bone growth, depending on their subunit composition. Activin A is a homodimer of INHBA that plays a role in several essential biological processes including embryonic development, stem cell maintenance and differentiation, haematopoiesis, cell proliferation and tissue fibrosis. Signals through type I (such as ACVR1B or ACVR1C) and type II receptors (such as ACVR2A, ACVR2B or BMPR2) which, upon ligand binding, phosphorylate SMAD2 and SMAD3 intracellular signaling mediators that form a complex with SMAD4, translocate to the nucleus and modulate gene expression. Can also activate alternative non-canonical intracellular signaling pathways including the p38 MAPK, extracellular signal-regulated kinases 1/2 (ERK1/2) and c-Jun N-terminal kinases (JNKs) to modulate cell migration and differentiation. Alternatively, promotes osteoblastic differentiation via ACVRL1-SMAD1/5/9 pathway. In addition, can engage the type I receptor ACVR1 to form an ACVR1-activin A-type II receptor non-signaling complex (NSC) that renders receptors unavailable for engagement with BMPs, hence resulting in an apparent inhibition of ACVR1-mediated BMP signaling. In terms of biological role, inhibin A is a dimer of alpha/INHA and beta-A/INHBA that functions as a feedback regulator in the hypothalamic-pituitary-gonadal (HPG) axis. Inhibits the secretion of FSH from the anterior pituitary gland by acting on pituitary gonadotrope cells. Antagonizes activin A by binding to the proteoglycan, betaglycan, and forming a stable complex with and, thereby, sequestering type II activin receptors while excluding type I receptor. The chain is Inhibin beta A chain (INHBA) from Homo sapiens (Human).